Consider the following 383-residue polypeptide: Erythronate-4-phosphate dehydrogenase (383 aa).

Serine 45 and threonine 66 together coordinate substrate. Residues aspartate 146, threonine 174, 205-207 (ASR), and aspartate 231 contribute to the NAD(+) site. The active site involves arginine 207. Glutamate 236 is an active-site residue. Histidine 253 (proton donor) is an active-site residue. Glycine 256 lines the NAD(+) pocket. Residue tyrosine 257 participates in substrate binding.

Belongs to the D-isomer specific 2-hydroxyacid dehydrogenase family. PdxB subfamily. As to quaternary structure, homodimer.

The protein resides in the cytoplasm. It carries out the reaction 4-phospho-D-erythronate + NAD(+) = (R)-3-hydroxy-2-oxo-4-phosphooxybutanoate + NADH + H(+). It functions in the pathway cofactor biosynthesis; pyridoxine 5'-phosphate biosynthesis; pyridoxine 5'-phosphate from D-erythrose 4-phosphate: step 2/5. In terms of biological role, catalyzes the oxidation of erythronate-4-phosphate to 3-hydroxy-2-oxo-4-phosphonooxybutanoate. The sequence is that of Erythronate-4-phosphate dehydrogenase from Pseudomonas entomophila (strain L48).